The chain runs to 322 residues: 2-methylene-furan-3-one reductase (322 aa).

NADP(+) contacts are provided by residues K59, 174 to 175 (GV), 197 to 200 (STKK), Y215, I253, 264 to 266 (FVL), and 311 to 312 (RA). Residue K59 participates in substrate binding.

This sequence belongs to the zinc-containing alcohol dehydrogenase family. Quinone oxidoreductase subfamily. In terms of assembly, monomer.

The catalysed reaction is 4-hydroxy-2,5-dimethyl-furan-3(2H)-one + NADP(+) = 4-hydroxy-5-methyl-2-methylenefuran-3(2H)-one + NADPH + H(+). In terms of biological role, enone oxidoreductase involved in the biosynthesis of 4-hydroxy-2,5-dimethyl-3(2H)-furanone (HDMF or furaneol), the key flavor compound in strawberries. The sequence is that of 2-methylene-furan-3-one reductase (EO) from Fragaria vesca (Woodland strawberry).